Reading from the N-terminus, the 480-residue chain is Adenosylhomocysteinase (480 aa).

Positions 63, 142, and 203 each coordinate substrate. 204 to 206 (TTT) contributes to the NAD(+) binding site. Substrate-binding residues include lysine 233 and aspartate 237. Residues asparagine 238, 267–272 (GYGDVG), glutamate 290, asparagine 325, 346–348 (IGH), and asparagine 394 each bind NAD(+).

This sequence belongs to the adenosylhomocysteinase family. NAD(+) serves as cofactor.

The protein localises to the cytoplasm. The catalysed reaction is S-adenosyl-L-homocysteine + H2O = L-homocysteine + adenosine. The protein operates within amino-acid biosynthesis; L-homocysteine biosynthesis; L-homocysteine from S-adenosyl-L-homocysteine: step 1/1. Its function is as follows. May play a key role in the regulation of the intracellular concentration of adenosylhomocysteine. In Xanthomonas euvesicatoria pv. vesicatoria (strain 85-10) (Xanthomonas campestris pv. vesicatoria), this protein is Adenosylhomocysteinase.